Consider the following 391-residue polypeptide: 3-ketoacyl-CoA thiolase (391 aa).

Cysteine 95 functions as the Acyl-thioester intermediate in the catalytic mechanism. Catalysis depends on proton acceptor residues histidine 347 and cysteine 377.

It belongs to the thiolase-like superfamily. Thiolase family. Heterotetramer of two alpha chains (FadB) and two beta chains (FadA).

The protein resides in the cytoplasm. It catalyses the reaction an acyl-CoA + acetyl-CoA = a 3-oxoacyl-CoA + CoA. It functions in the pathway lipid metabolism; fatty acid beta-oxidation. Functionally, catalyzes the final step of fatty acid oxidation in which acetyl-CoA is released and the CoA ester of a fatty acid two carbons shorter is formed. This is 3-ketoacyl-CoA thiolase from Pseudomonas savastanoi pv. phaseolicola (strain 1448A / Race 6) (Pseudomonas syringae pv. phaseolicola (strain 1448A / Race 6)).